The sequence spans 137 residues: Chaperone protein YscB (137 aa).

In terms of assembly, interacts with SycN to form a complex which specifically binds to YopN.

Its subcellular location is the cytoplasm. It is found in the cell inner membrane. Functionally, functions as a specific chaperone for YopN. It could facilitate the secretion and the subsequent translocation of YopN. This Yersinia pestis protein is Chaperone protein YscB (yscB).